The following is a 182-amino-acid chain: Nucleoid-associated protein At2g24020, chloroplastic (182 aa).

A chloroplast-targeting transit peptide spans 1–48; sequence MASMAATTNFTKSMLFPFSHVSGNASLNSQRRTWPKQYKSKNGYRSLR.

It belongs to the YbaB/EbfC family. Homodimer. Interacts with ALB3 and ALB4.

It localises to the plastid. Its subcellular location is the chloroplast stroma. Its function is as follows. Participates with ALB4 in thylakoid protein targeting. May function with specific subset of thylakoidal proteins. Binds to DNA and alters its conformation. May be involved in regulation of gene expression, nucleoid organization and DNA protection. The polypeptide is Nucleoid-associated protein At2g24020, chloroplastic (Arabidopsis thaliana (Mouse-ear cress)).